The primary structure comprises 176 residues: Cytochrome b (176 aa).

3 helical membrane-spanning segments follow: residues 33–53, 77–98, and 113–133; these read FGSL…FLAM, WLIR…FLHV, and WNIG…GYVL. His83 and His97 together coordinate heme b.

This sequence belongs to the cytochrome b family. As to quaternary structure, the cytochrome bc1 complex contains 11 subunits: 3 respiratory subunits (MT-CYB, CYC1 and UQCRFS1), 2 core proteins (UQCRC1 and UQCRC2) and 6 low-molecular weight proteins (UQCRH/QCR6, UQCRB/QCR7, UQCRQ/QCR8, UQCR10/QCR9, UQCR11/QCR10 and a cleavage product of UQCRFS1). This cytochrome bc1 complex then forms a dimer. It depends on heme b as a cofactor.

It is found in the mitochondrion inner membrane. In terms of biological role, component of the ubiquinol-cytochrome c reductase complex (complex III or cytochrome b-c1 complex) that is part of the mitochondrial respiratory chain. The b-c1 complex mediates electron transfer from ubiquinol to cytochrome c. Contributes to the generation of a proton gradient across the mitochondrial membrane that is then used for ATP synthesis. The chain is Cytochrome b (MT-CYB) from Sciurus carolinensis (Eastern gray squirrel).